Consider the following 110-residue polypeptide: Thiosulfate sulfurtransferase GlpE (110 aa).

Residues His-17–Glu-105 form the Rhodanese domain. Cys-65 functions as the Cysteine persulfide intermediate in the catalytic mechanism.

This sequence belongs to the GlpE family.

Its subcellular location is the cytoplasm. The enzyme catalyses thiosulfate + hydrogen cyanide = thiocyanate + sulfite + 2 H(+). It carries out the reaction thiosulfate + [thioredoxin]-dithiol = [thioredoxin]-disulfide + hydrogen sulfide + sulfite + 2 H(+). In terms of biological role, transferase that catalyzes the transfer of sulfur from thiosulfate to thiophilic acceptors such as cyanide or dithiols. May function in a CysM-independent thiosulfate assimilation pathway by catalyzing the conversion of thiosulfate to sulfite, which can then be used for L-cysteine biosynthesis. This Enterobacter sp. (strain 638) protein is Thiosulfate sulfurtransferase GlpE.